A 289-amino-acid chain; its full sequence is Phosphatidylglycerol--prolipoprotein diacylglyceryl transferase (289 aa).

7 consecutive transmembrane segments (helical) span residues 17–37 (LAVR…ILLG), 57–77 (MLFY…IFFY), 89–109 (IFAV…VIAA), 121–141 (WLVV…AGRI), 174–194 (QLYE…IYSA), 200–220 (GAVS…AEFF), and 235–255 (ISMG…MLVW). Arg140 is an a 1,2-diacyl-sn-glycero-3-phospho-(1'-sn-glycerol) binding site.

The protein belongs to the Lgt family.

Its subcellular location is the cell inner membrane. The catalysed reaction is L-cysteinyl-[prolipoprotein] + a 1,2-diacyl-sn-glycero-3-phospho-(1'-sn-glycerol) = an S-1,2-diacyl-sn-glyceryl-L-cysteinyl-[prolipoprotein] + sn-glycerol 1-phosphate + H(+). The protein operates within protein modification; lipoprotein biosynthesis (diacylglyceryl transfer). In terms of biological role, catalyzes the transfer of the diacylglyceryl group from phosphatidylglycerol to the sulfhydryl group of the N-terminal cysteine of a prolipoprotein, the first step in the formation of mature lipoproteins. In Nitrosospira multiformis (strain ATCC 25196 / NCIMB 11849 / C 71), this protein is Phosphatidylglycerol--prolipoprotein diacylglyceryl transferase.